Consider the following 528-residue polypeptide: GMP synthase [glutamine-hydrolyzing] (528 aa).

A Glutamine amidotransferase type-1 domain is found at Ala13–Asp204. Cys90 (nucleophile) is an active-site residue. Residues His178 and Glu180 contribute to the active site. The 199-residue stretch at Trp205 to Arg403 folds into the GMPS ATP-PPase domain. Ser232–Ser238 is an ATP binding site.

Homodimer.

It carries out the reaction XMP + L-glutamine + ATP + H2O = GMP + L-glutamate + AMP + diphosphate + 2 H(+). It participates in purine metabolism; GMP biosynthesis; GMP from XMP (L-Gln route): step 1/1. Its function is as follows. Catalyzes the synthesis of GMP from XMP. In Synechococcus sp. (strain CC9605), this protein is GMP synthase [glutamine-hydrolyzing].